A 177-amino-acid polypeptide reads, in one-letter code: ATP synthase subunit delta (177 aa).

This sequence belongs to the ATPase delta chain family. In terms of assembly, F-type ATPases have 2 components, F(1) - the catalytic core - and F(0) - the membrane proton channel. F(1) has five subunits: alpha(3), beta(3), gamma(1), delta(1), epsilon(1). F(0) has three main subunits: a(1), b(2) and c(10-14). The alpha and beta chains form an alternating ring which encloses part of the gamma chain. F(1) is attached to F(0) by a central stalk formed by the gamma and epsilon chains, while a peripheral stalk is formed by the delta and b chains.

The protein localises to the cell inner membrane. Functionally, f(1)F(0) ATP synthase produces ATP from ADP in the presence of a proton or sodium gradient. F-type ATPases consist of two structural domains, F(1) containing the extramembraneous catalytic core and F(0) containing the membrane proton channel, linked together by a central stalk and a peripheral stalk. During catalysis, ATP synthesis in the catalytic domain of F(1) is coupled via a rotary mechanism of the central stalk subunits to proton translocation. This protein is part of the stalk that links CF(0) to CF(1). It either transmits conformational changes from CF(0) to CF(1) or is implicated in proton conduction. The polypeptide is ATP synthase subunit delta (Neisseria gonorrhoeae (strain NCCP11945)).